Consider the following 434-residue polypeptide: Protein POLLENLESS 3 (434 aa).

The tract at residues 13-47 (VYYTPPPARTSDHVAAMPMTERRRPPYSCSSSSER) is disordered. The Nuclear localization signal 1 signature appears at 34–37 (RRRP). 4 TPR repeats span residues 95 to 131 (DSAL…ESQD), 133 to 164 (IDNL…LEQG), 191 to 224 (ARIL…ERDK), and 241 to 274 (PEAK…AVEM). Residues 142-166 (KKSGRIEEEAVLLEHKLQTLEQGMG) are a coiled coil. A disordered region spans residues 309–329 (TANKNYSDVSSSPASVRPNSA). Residues 310-326 (ANKNYSDVSSSPASVRP) show a composition bias toward polar residues. The Nuclear localization signal 2 signature appears at 377 to 380 (KRKK). The span at 393–408 (VKDTADGPKSESKKSW) shows a compositional bias: basic and acidic residues. The segment at 393–434 (VKDTADGPKSESKKSWADIAEEEEAEEEEEERLQGELKTAEM) is disordered. Residues 408–434 (WADIAEEEEAEEEEEERLQGELKTAEM) are a coiled coil. The segment covering 411-423 (IAEEEEAEEEEEE) has biased composition (acidic residues). A compositionally biased stretch (basic and acidic residues) spans 424–434 (RLQGELKTAEM).

Belongs to the MS5 protein family. In terms of tissue distribution, expressed at low levels mostly in floral organs during meiosis. Also barely detectable in leaves, stems and roots.

It localises to the nucleus. Functionally, essential for male fertility, especially for microspore and pollen grain production. Involved in the regulation of cell division after male meiosis I and II to facilitate exit from meiosis and transition to G1. This Arabidopsis thaliana (Mouse-ear cress) protein is Protein POLLENLESS 3.